The primary structure comprises 195 residues: Protein Fer3 (195 aa).

Disordered regions lie at residues 1 to 24 (MQHPHPIDQPTYMPDVPFQPLWGQ) and 56 to 82 (PLVPQRPSTNGRANGSSSSSKKTRRRV). Low complexity predominate over residues 63-75 (STNGRANGSSSSS). One can recognise a bHLH domain in the interval 86–138 (AQRRAANIRERRRMFNLNEAFDKLRRKVPTFAYEKRLSRIETLRLAITYIGFM). A disordered region spans residues 145 to 175 (TPSNSHKSRSDVYGSMNGHHQAPPPAIHPHH).

The protein localises to the nucleus. In terms of biological role, transcription factor that binds to the E-box and functions as inhibitor of transcription. DNA binding requires dimerization with an E protein. Inhibits transcription activation by ASCL1/MASH1 by sequestering E proteins. This Drosophila melanogaster (Fruit fly) protein is Protein Fer3 (fer3).